The primary structure comprises 504 residues: Light-independent protochlorophyllide reductase subunit B (504 aa).

Position 36 (aspartate 36) interacts with [4Fe-4S] cluster. Catalysis depends on aspartate 279, which acts as the Proton donor. 414 to 415 (GL) is a substrate binding site.

It belongs to the ChlB/BchB/BchZ family. In terms of assembly, protochlorophyllide reductase is composed of three subunits; BchL, BchN and BchB. Forms a heterotetramer of two BchB and two BchN subunits. [4Fe-4S] cluster serves as cofactor.

It carries out the reaction chlorophyllide a + oxidized 2[4Fe-4S]-[ferredoxin] + 2 ADP + 2 phosphate = protochlorophyllide a + reduced 2[4Fe-4S]-[ferredoxin] + 2 ATP + 2 H2O. It functions in the pathway porphyrin-containing compound metabolism; bacteriochlorophyll biosynthesis (light-independent). In terms of biological role, component of the dark-operative protochlorophyllide reductase (DPOR) that uses Mg-ATP and reduced ferredoxin to reduce ring D of protochlorophyllide (Pchlide) to form chlorophyllide a (Chlide). This reaction is light-independent. The NB-protein (BchN-BchB) is the catalytic component of the complex. This chain is Light-independent protochlorophyllide reductase subunit B, found in Acidiphilium rubrum.